We begin with the raw amino-acid sequence, 233 residues long: Delta-actitoxin-Amc1a (233 aa).

Positions 1 to 18 (MKRIFIVALLFATCLVNA) are cleaved as a signal peptide. 2 propeptides span residues 19–29 (KPSINDADIKR) and 30–33 (EPEP). Position 39 is a hydroxyproline (Pro-39). Disulfide bonds link Cys-40–Cys-51 and Cys-43–Cys-58. 2 consecutive propeptides follow at residues 61–63 (RKR) and 64–67 (EPEP). Pro-73 bears the Hydroxyproline mark. 2 disulfides stabilise this stretch: Cys-74–Cys-85 and Cys-77–Cys-92. 2 propeptides span residues 95-97 (RKR) and 98-101 (EPEP). At Pro-107 the chain carries Hydroxyproline. Cystine bridges form between Cys-108/Cys-119 and Cys-111/Cys-126. Propeptides lie at residues 129-131 (RKR) and 132-135 (EPEP). Pro-141 is modified (hydroxyproline). 2 disulfide bridges follow: Cys-142/Cys-153 and Cys-145/Cys-160. Propeptides lie at residues 163-165 (RKR) and 166-169 (EPEP). The residue at position 175 (Pro-175) is a Hydroxyproline. 2 disulfide bridges follow: Cys-176–Cys-187 and Cys-179–Cys-194. Propeptides lie at residues 197–199 (RKR) and 200–203 (EPEP). Hydroxyproline is present on Pro-209. Cystine bridges form between Cys-210–Cys-221 and Cys-213–Cys-228. Positions 231–233 (RKR) are excised as a propeptide.

It belongs to the sea anemone BBH family. Each Am I peptide may contain 2 disulfide bonds. In terms of processing, the precursor protein seems to be processed in the following sequence: release of the signal peptide and of the propeptide, production of six identical 34-residue peptides by cleavage between Arg and Glu, release of four N-terminal and three C-terminal residues from each peptide and hydroxylation of each Pro in position 6 of the resulting 27-residue peptides.

It localises to the secreted. Its subcellular location is the nematocyst. Its function is as follows. May inhibit voltage-gated sodium channels (Nav). In Antheopsis maculata (Sea anemone), this protein is Delta-actitoxin-Amc1a.